A 586-amino-acid polypeptide reads, in one-letter code: Arginine--tRNA ligase (586 aa).

The 'HIGH' region motif lies at 133 to 143 (ANPTGPLNIVS).

It belongs to the class-I aminoacyl-tRNA synthetase family. In terms of assembly, monomer.

It is found in the cytoplasm. The enzyme catalyses tRNA(Arg) + L-arginine + ATP = L-arginyl-tRNA(Arg) + AMP + diphosphate. This chain is Arginine--tRNA ligase, found in Leptospira interrogans serogroup Icterohaemorrhagiae serovar Lai (strain 56601).